Reading from the N-terminus, the 590-residue chain is Aspartate--tRNA(Asp/Asn) ligase (590 aa).

Glu176 lines the L-aspartate pocket. The segment at 200–203 (QLFK) is aspartate. L-aspartate is bound by residues Arg222 and His451. Position 222–224 (222–224 (RDE)) interacts with ATP. Residue Glu485 participates in ATP binding. Residue Arg492 coordinates L-aspartate. 537 to 540 (GIDR) contacts ATP.

This sequence belongs to the class-II aminoacyl-tRNA synthetase family. Type 1 subfamily. In terms of assembly, homodimer.

The protein resides in the cytoplasm. The enzyme catalyses tRNA(Asx) + L-aspartate + ATP = L-aspartyl-tRNA(Asx) + AMP + diphosphate. Aspartyl-tRNA synthetase with relaxed tRNA specificity since it is able to aspartylate not only its cognate tRNA(Asp) but also tRNA(Asn). Reaction proceeds in two steps: L-aspartate is first activated by ATP to form Asp-AMP and then transferred to the acceptor end of tRNA(Asp/Asn). The protein is Aspartate--tRNA(Asp/Asn) ligase of Ehrlichia canis (strain Jake).